We begin with the raw amino-acid sequence, 1036 residues long: Isoleucine--tRNA ligase (1036 aa).

The 'HIGH' region signature appears at 46–56 (PFATGLPHYGH). The 'KMSKS' region signature appears at 589-593 (KMSKR). Lys592 is an ATP binding site.

It belongs to the class-I aminoacyl-tRNA synthetase family. IleS type 2 subfamily. As to quaternary structure, monomer. The cofactor is Zn(2+).

Its subcellular location is the cytoplasm. It catalyses the reaction tRNA(Ile) + L-isoleucine + ATP = L-isoleucyl-tRNA(Ile) + AMP + diphosphate. In terms of biological role, catalyzes the attachment of isoleucine to tRNA(Ile). As IleRS can inadvertently accommodate and process structurally similar amino acids such as valine, to avoid such errors it has two additional distinct tRNA(Ile)-dependent editing activities. One activity is designated as 'pretransfer' editing and involves the hydrolysis of activated Val-AMP. The other activity is designated 'posttransfer' editing and involves deacylation of mischarged Val-tRNA(Ile). The chain is Isoleucine--tRNA ligase from Chlamydia trachomatis serovar D (strain ATCC VR-885 / DSM 19411 / UW-3/Cx).